Reading from the N-terminus, the 359-residue chain is uncharacterized protein (359 aa).

Residue 46 to 53 (GPKSSGKS) coordinates ATP.

This sequence belongs to the archaeal ATPase family.

This is an uncharacterized protein from Methanocaldococcus jannaschii (strain ATCC 43067 / DSM 2661 / JAL-1 / JCM 10045 / NBRC 100440) (Methanococcus jannaschii).